Consider the following 151-residue polypeptide: Small ribosomal subunit protein uS15 (151 aa).

The tract at residues 1–20 (MARLHSGKRGSSGSTRPLRT) is disordered.

Belongs to the universal ribosomal protein uS15 family. Part of the 30S ribosomal subunit.

This is Small ribosomal subunit protein uS15 from Methanococcus maripaludis (strain C7 / ATCC BAA-1331).